Reading from the N-terminus, the 144-residue chain is Large ribosomal subunit protein uL16 (144 aa).

Positions 1–16 are enriched in basic residues; sequence MLIPKRVKYRKQHRPR. The disordered stretch occupies residues 1-25; the sequence is MLIPKRVKYRKQHRPRGNGGVSKGG.

The protein belongs to the universal ribosomal protein uL16 family. Part of the 50S ribosomal subunit.

In terms of biological role, binds 23S rRNA and is also seen to make contacts with the A and possibly P site tRNAs. This is Large ribosomal subunit protein uL16 from Desulforamulus reducens (strain ATCC BAA-1160 / DSM 100696 / MI-1) (Desulfotomaculum reducens).